The sequence spans 550 residues: CTP synthase (550 aa).

Residues 1-271 are amidoligase domain; that stretch reads MTRYIFITGG…DAEVLDVFGM (271 aa). Serine 13 is a CTP binding site. Serine 13 is a binding site for UTP. 14 to 19 contributes to the ATP binding site; that stretch reads SLGKGL. Residue tyrosine 54 coordinates L-glutamine. Position 71 (aspartate 71) interacts with ATP. Residues aspartate 71 and glutamate 145 each coordinate Mg(2+). CTP contacts are provided by residues 152-154, 192-197, and lysine 228; these read DIE and KTKPTQ. UTP-binding positions include 192–197 and lysine 228; that span reads KTKPTQ. The region spanning 297-549 is the Glutamine amidotransferase type-1 domain; it reads TIAVVGKYTV…IAAAKEHGRL (253 aa). Residue glycine 361 coordinates L-glutamine. Residue cysteine 388 is the Nucleophile; for glutamine hydrolysis of the active site. L-glutamine is bound by residues 389-392, glutamate 412, and arginine 477; that span reads FGMQ. Catalysis depends on residues histidine 522 and glutamate 524.

Belongs to the CTP synthase family. As to quaternary structure, homotetramer.

It catalyses the reaction UTP + L-glutamine + ATP + H2O = CTP + L-glutamate + ADP + phosphate + 2 H(+). The enzyme catalyses L-glutamine + H2O = L-glutamate + NH4(+). The catalysed reaction is UTP + NH4(+) + ATP = CTP + ADP + phosphate + 2 H(+). It functions in the pathway pyrimidine metabolism; CTP biosynthesis via de novo pathway; CTP from UDP: step 2/2. Its activity is regulated as follows. Allosterically activated by GTP, when glutamine is the substrate; GTP has no effect on the reaction when ammonia is the substrate. The allosteric effector GTP functions by stabilizing the protein conformation that binds the tetrahedral intermediate(s) formed during glutamine hydrolysis. Inhibited by the product CTP, via allosteric rather than competitive inhibition. In terms of biological role, catalyzes the ATP-dependent amination of UTP to CTP with either L-glutamine or ammonia as the source of nitrogen. Regulates intracellular CTP levels through interactions with the four ribonucleotide triphosphates. The protein is CTP synthase of Caulobacter vibrioides (strain ATCC 19089 / CIP 103742 / CB 15) (Caulobacter crescentus).